The sequence spans 54 residues: Potassium channel toxin alpha-KTx 14.1 (54 aa).

Positions 1 to 23 (MKIFFAILLILAVCSMAIWTVNG) are cleaved as a signal peptide.

This sequence belongs to the short scorpion toxin superfamily. Potassium channel inhibitor family. Alpha-KTx 14 subfamily. In terms of processing, probably has three disulfide bridges. As to expression, expressed by the venom gland.

The protein localises to the secreted. In terms of biological role, potential blocker of potassium channels. The sequence is that of Potassium channel toxin alpha-KTx 14.1 from Olivierus martensii (Manchurian scorpion).